A 318-amino-acid chain; its full sequence is Methionyl-tRNA formyltransferase (318 aa).

(6S)-5,6,7,8-tetrahydrofolate is bound at residue 114–117 (SLLP).

It belongs to the Fmt family.

The enzyme catalyses L-methionyl-tRNA(fMet) + (6R)-10-formyltetrahydrofolate = N-formyl-L-methionyl-tRNA(fMet) + (6S)-5,6,7,8-tetrahydrofolate + H(+). Attaches a formyl group to the free amino group of methionyl-tRNA(fMet). The formyl group appears to play a dual role in the initiator identity of N-formylmethionyl-tRNA by promoting its recognition by IF2 and preventing the misappropriation of this tRNA by the elongation apparatus. The polypeptide is Methionyl-tRNA formyltransferase (Protochlamydia amoebophila (strain UWE25)).